Consider the following 355-residue polypeptide: N6-Methyl-AMP deaminase (355 aa).

Zn(2+)-binding residues include H24 and H26. Residues H26, N28, H74, 106–109 (STPR), D148, and G181 contribute to the N(6)-methyl-AMP site. H208 is a Zn(2+) binding site. Positions 211, 293, and 294 each coordinate N(6)-methyl-AMP. Catalysis depends on E211, which acts as the Proton donor. A Zn(2+)-binding site is contributed by D293.

The protein belongs to the metallo-dependent hydrolases superfamily. Adenosine and AMP deaminases family. In terms of assembly, monomer. It depends on Zn(2+) as a cofactor.

The catalysed reaction is N(6)-methyl-AMP + H2O + H(+) = IMP + methylamine. Functionally, catalyzes the hydrolysis of the free cytosolic methylated adenosine nucleotide N(6)-methyl-AMP (N6-mAMP) to produce inositol monophosphate (IMP) and methylamine. Is required for the catabolism of cytosolic N6-mAMP, which is derived from the degradation of mRNA containing N6-methylated adenine (m6A). Catalyzes the removal of different alkyl groups not only from N6-substituted purine or 2-aminopurine nucleoside monophosphates but also from O6-substituted compounds in vitro. The polypeptide is N6-Methyl-AMP deaminase (Homo sapiens (Human)).